The primary structure comprises 383 residues: Succinate--CoA ligase [ADP-forming] subunit beta 2 (383 aa).

Residues 9–231 form the ATP-grasp domain; it reads RELFKEHGIV…QEDADSLEAR (223 aa). ATP is bound by residues lysine 45, 52-54, cysteine 94, and glutamate 99; that span reads GRG. Positions 187 and 201 each coordinate Mg(2+). Substrate-binding positions include asparagine 251 and 308 to 310; that span reads GIT.

It belongs to the succinate/malate CoA ligase beta subunit family. As to quaternary structure, heterotetramer of two alpha and two beta subunits. The cofactor is Mg(2+).

The enzyme catalyses succinate + ATP + CoA = succinyl-CoA + ADP + phosphate. It carries out the reaction GTP + succinate + CoA = succinyl-CoA + GDP + phosphate. It participates in carbohydrate metabolism; tricarboxylic acid cycle; succinate from succinyl-CoA (ligase route): step 1/1. Functionally, succinyl-CoA synthetase functions in the citric acid cycle (TCA), coupling the hydrolysis of succinyl-CoA to the synthesis of either ATP or GTP and thus represents the only step of substrate-level phosphorylation in the TCA. The beta subunit provides nucleotide specificity of the enzyme and binds the substrate succinate, while the binding sites for coenzyme A and phosphate are found in the alpha subunit. The polypeptide is Succinate--CoA ligase [ADP-forming] subunit beta 2 (Streptomyces coelicolor (strain ATCC BAA-471 / A3(2) / M145)).